The sequence spans 438 residues: Histidine--tRNA ligase (438 aa).

This sequence belongs to the class-II aminoacyl-tRNA synthetase family. As to quaternary structure, homodimer.

The protein localises to the cytoplasm. It catalyses the reaction tRNA(His) + L-histidine + ATP = L-histidyl-tRNA(His) + AMP + diphosphate + H(+). In Aromatoleum aromaticum (strain DSM 19018 / LMG 30748 / EbN1) (Azoarcus sp. (strain EbN1)), this protein is Histidine--tRNA ligase.